The sequence spans 772 residues: MENNAYPTLPLKNTVLFPHLVLPLSVGRAGSIAAVEAALSSEDKLIAVFPQKDPRTDEPAADDLFRFGTVGIIKKMVRSEDTVQILVQGIERVEQLEMVQKQPYLSLKIATLSEPSDTGTEIEALHRTVIELAGKMIELVQPQIQVGIHHIISDVEKPLHQIYLLTSILSLDFDKEKELLAAATQVEALQLMHRYLNHEVQVLEVRQKITSTAQTEIDKKQREYVLRQQLEAIQEELGETNPEQAEIKELRQRMEETELPELVRKEVEKEITRLERMPSAAPDYQLTRGYVELALELPWNKTTEDRLDLKRAREILDEDHFDLEDVKERIIEHLAVMKLNPEAKSPILCFVGPPGVGKTSVGQSMARALGRKFERMSLGGLHDESELRGHRRTYIGAMPGRIIRAIRRTGYQNPLLMLDEIDKLGRDFRGDPAAALLEILDPAQNAEFHDNYLDLPFDLSKIFFVTTANTLDTIPRPLLDRMEILRLPGYSDEEKQHIARRYLIGRQIREAGLSEIQLSIPDETLSYLIRRYTREAGVRELERMLGRIARKVATQVATGQTQPVTVTPQDLVELLGPERFFAEEMRQQLAPGVAAGLAWTEAGGDVLYVEAALLPEGKGMTLTGQLGSIMQESAKAAQSYLWSRAEELNIDQKTIRESGVHIHVPAGAIPKDGPSAGVTMASALTSAYAHQPVRSDTAMTGEITLSGLVLPVGGIKEKVLAAHRSGIQRIILPKENEKDLREIPEHVRQSIQFILARRIEEVLAEAIPDLNR.

Residues 6-200 (YPTLPLKNTV…LMHRYLNHEV (195 aa)) form the Lon N-terminal domain. 352-359 (GPPGVGKT) is an ATP binding site. One can recognise a Lon proteolytic domain in the interval 588–769 (QLAPGVAAGL…EEVLAEAIPD (182 aa)). Active-site residues include S675 and K718.

It belongs to the peptidase S16 family. As to quaternary structure, homohexamer. Organized in a ring with a central cavity.

The protein localises to the cytoplasm. The catalysed reaction is Hydrolysis of proteins in presence of ATP.. Its function is as follows. ATP-dependent serine protease that mediates the selective degradation of mutant and abnormal proteins as well as certain short-lived regulatory proteins. Required for cellular homeostasis and for survival from DNA damage and developmental changes induced by stress. Degrades polypeptides processively to yield small peptide fragments that are 5 to 10 amino acids long. Binds to DNA in a double-stranded, site-specific manner. This Nitrosococcus oceani (strain ATCC 19707 / BCRC 17464 / JCM 30415 / NCIMB 11848 / C-107) protein is Lon protease.